The following is a 334-amino-acid chain: Heat-inducible transcription repressor HrcA (334 aa).

It belongs to the HrcA family.

Functionally, negative regulator of class I heat shock genes (grpE-dnaK-dnaJ and groELS operons). Prevents heat-shock induction of these operons. This is Heat-inducible transcription repressor HrcA from Verminephrobacter eiseniae (strain EF01-2).